The sequence spans 180 residues: Bifunctional protein PyrR (180 aa).

Residues 101–113 carry the PRPP-binding motif; that stretch reads LIVVDDVLFTGRT.

Belongs to the purine/pyrimidine phosphoribosyltransferase family. PyrR subfamily. As to quaternary structure, homodimer and homohexamer; in equilibrium.

The enzyme catalyses UMP + diphosphate = 5-phospho-alpha-D-ribose 1-diphosphate + uracil. Functionally, regulates transcriptional attenuation of the pyrimidine nucleotide (pyr) operon by binding in a uridine-dependent manner to specific sites on pyr mRNA. This disrupts an antiterminator hairpin in the RNA and favors formation of a downstream transcription terminator, leading to a reduced expression of downstream genes. Also displays a weak uracil phosphoribosyltransferase activity which is not physiologically significant. The protein is Bifunctional protein PyrR of Bacillus pumilus (strain SAFR-032).